The primary structure comprises 1076 residues: Inositol-1,4,5-trisphosphate 5-phosphatase 1 (1076 aa).

An SAC domain is found at 144–474 (LRKLLTNGSF…GDALARIYTG (331 aa)). The catalytic stretch occupies residues 534–880 (YDPIHEYVNH…QEVRDASQTS (347 aa)). Disordered regions lie at residues 930 to 958 (AAPPGPEYRLNPSRPINPFEPTAEPDWIS) and 977 to 1076 (LSPA…KPLV). 2 stretches are compositionally biased toward low complexity: residues 977–1004 (LSPAPSSLARSSVSSQRSSTSIIPIKPN) and 1025–1040 (SGSSSSGVPAPNLTPV). The span at 1065-1076 (PEESSISWKPLV) shows a compositional bias: polar residues.

This sequence belongs to the synaptojanin family. In the central section; belongs to the inositol 1,4,5-trisphosphate 5-phosphatase family. The cofactor is Mg(2+).

The protein resides in the cytoplasm. The enzyme catalyses a 1,2-diacyl-sn-glycero-3-phospho-(1D-myo-inositol-4,5-bisphosphate) + H2O = a 1,2-diacyl-sn-glycero-3-phospho-(1D-myo-inositol 4-phosphate) + phosphate. Controls the cellular levels and subcellular distribution of phosphatidylinositol 3-phosphate and phosphatidylinositol 4,5-bisphosphate. Involved in distinct membrane trafficking and signal transduction pathways. Highly active against a range of soluble and lipid inositol phosphates. Active in dephosphorylating the 5-position of Ins(1,4,5)P3 and Ins(1,3,4,5)P4 and to a lesser extent Ins(1,4,5,6)P4. The enzyme is also active against PI(4,5)P2 presented in sonicated vesicles and Triton mixed micelles, and somewhat less active against PI(3,5)P2 in unilamellar vesicles. Activity against PI(3,5)P2 drops sharply when this substrate is presented in mixed micelles. Also hydrolyzes PIP3 to produce PI(3,4)P2. This is Inositol-1,4,5-trisphosphate 5-phosphatase 1 (syj1) from Schizosaccharomyces pombe (strain 972 / ATCC 24843) (Fission yeast).